We begin with the raw amino-acid sequence, 328 residues long: Biotin synthase (328 aa).

Positions F50–R277 constitute a Radical SAM core domain. [4Fe-4S] cluster-binding residues include C67, C71, and C74. [2Fe-2S] cluster contacts are provided by S111, C142, and C202.

Belongs to the radical SAM superfamily. Biotin synthase family. As to quaternary structure, homodimer. Requires [4Fe-4S] cluster as cofactor. It depends on [2Fe-2S] cluster as a cofactor.

It catalyses the reaction (4R,5S)-dethiobiotin + (sulfur carrier)-SH + 2 reduced [2Fe-2S]-[ferredoxin] + 2 S-adenosyl-L-methionine = (sulfur carrier)-H + biotin + 2 5'-deoxyadenosine + 2 L-methionine + 2 oxidized [2Fe-2S]-[ferredoxin]. It participates in cofactor biosynthesis; biotin biosynthesis; biotin from 7,8-diaminononanoate: step 2/2. In terms of biological role, catalyzes the conversion of dethiobiotin (DTB) to biotin by the insertion of a sulfur atom into dethiobiotin via a radical-based mechanism. This chain is Biotin synthase, found in Desulfatibacillum aliphaticivorans.